The following is a 189-amino-acid chain: Putative manganese efflux pump MntP (189 aa).

A run of 6 helical transmembrane segments spans residues 2-22 (SLTE…AVSI), 36-56 (ILQM…IGYY), 71-91 (WIAF…SITA), 106-126 (LLLV…VSLS), 132-152 (ILYS…AAIL), and 167-187 (IVGG…HMFF).

It belongs to the MntP (TC 9.B.29) family.

It is found in the cell membrane. Probably functions as a manganese efflux pump. This is Putative manganese efflux pump MntP from Ruminiclostridium cellulolyticum (strain ATCC 35319 / DSM 5812 / JCM 6584 / H10) (Clostridium cellulolyticum).